Here is an 862-residue protein sequence, read N- to C-terminus: Dipeptidyl peptidase 9 (862 aa).

Residues Ser-729, Asp-807, and His-839 each act as charge relay system in the active site. Ser-729 is a Val-boroPro binding site.

This sequence belongs to the peptidase S9B family. DPPIV subfamily. Homodimer. Forms a ternary complex with NLRP1, composed of a DPP9 homodimer, one full-length NLRP1 protein, and one cleaved C-terminus of NLRP1 (NACHT, LRR and PYD domains-containing protein 1, C-terminus). Forms a ternary complex with CARD8, composed of a DPP9 homodimer, one full-length NLRP1 protein, and one cleaved C-terminus of CARD8 (Caspase recruitment domain-containing protein 8, C-terminus). In the ternary complex, only one subunit of the DPP9 homodimer is bound to NLRP1 or CARD8. As to expression, detected in kidney, skin, brain, thymus and liver (at protein level).

The protein resides in the cytoplasm. It is found in the cytosol. The enzyme catalyses Release of an N-terminal dipeptide, Xaa-Yaa-|-Zaa-, from a polypeptide, preferentially when Yaa is Pro, provided Zaa is neither Pro nor hydroxyproline.. Inhibited by the serine proteinase inhibitor 4-(2-aminoethyl)benzenesulphonyl fluoride (AEBSF), and by di-isopropylfluorophosphate. Inhibited by Val-boroPro (Talabostat, PT-100), a non-selective inhibitor, which triggers pyroptosis in monocytes and macrophages. Val-boroPro inhibits activity by binding to the active site, mimicking a substrate-bound state, thereby displacing the C-terminal fragment of NLRP1, leading to activation of the NLRP1 inflammasome. In contrast, Val-boroPro does not directly displaces CARD8: it acts by promoting degradation of the N-terminal part of CARD8, leading to indirect disruption of the ternary complex. Functionally, dipeptidyl peptidase that cleaves off N-terminal dipeptides from proteins having a Pro or Ala residue at position 2. Acts as a key inhibitor of caspase-1-dependent monocyte and macrophage pyroptosis in resting cells by preventing activation of NLRP1 and CARD8. Sequesters the cleaved C-terminal part of NLRP1 and CARD8, which respectively constitute the active part of the NLRP1 and CARD8 inflammasomes, in a ternary complex, thereby preventing their oligomerization and activation. The dipeptidyl peptidase activity is required to suppress NLRP1 and CARD8; however, neither NLRP1 nor CARD8 are bona fide substrates of DPP9, suggesting the existence of substrate(s) required for NLRP1 and CARD8 inhibition. The polypeptide is Dipeptidyl peptidase 9 (Mus musculus (Mouse)).